We begin with the raw amino-acid sequence, 442 residues long: ATP-dependent protease ATPase subunit HslU (442 aa).

ATP-binding positions include isoleucine 18 and 60-65; that span reads GVGKTE. Residues 136–157 form a disordered region; sequence LPKPKNDWESTETDSSSNTRQV. ATP contacts are provided by aspartate 255, glutamate 320, and arginine 392.

The protein belongs to the ClpX chaperone family. HslU subfamily. As to quaternary structure, a double ring-shaped homohexamer of HslV is capped on each side by a ring-shaped HslU homohexamer. The assembly of the HslU/HslV complex is dependent on binding of ATP.

The protein localises to the cytoplasm. ATPase subunit of a proteasome-like degradation complex; this subunit has chaperone activity. The binding of ATP and its subsequent hydrolysis by HslU are essential for unfolding of protein substrates subsequently hydrolyzed by HslV. HslU recognizes the N-terminal part of its protein substrates and unfolds these before they are guided to HslV for hydrolysis. This Shewanella baltica (strain OS185) protein is ATP-dependent protease ATPase subunit HslU.